Reading from the N-terminus, the 255-residue chain is Octanoyltransferase (255 aa).

Residues 1–27 (MPPASDAHAAPDAAASTSASPQSCAAP) form a disordered region. Residues 59 to 240 (PDTGDEIWVV…RLIANLDGAT (182 aa)) enclose the BPL/LPL catalytic domain. Residues 99 to 106 (RGGQITYH), 171 to 173 (ALG), and 184 to 186 (GLS) contribute to the substrate site. Catalysis depends on Cys202, which acts as the Acyl-thioester intermediate.

Belongs to the LipB family.

The protein localises to the cytoplasm. It catalyses the reaction octanoyl-[ACP] + L-lysyl-[protein] = N(6)-octanoyl-L-lysyl-[protein] + holo-[ACP] + H(+). The protein operates within protein modification; protein lipoylation via endogenous pathway; protein N(6)-(lipoyl)lysine from octanoyl-[acyl-carrier-protein]: step 1/2. In terms of biological role, catalyzes the transfer of endogenously produced octanoic acid from octanoyl-acyl-carrier-protein onto the lipoyl domains of lipoate-dependent enzymes. Lipoyl-ACP can also act as a substrate although octanoyl-ACP is likely to be the physiological substrate. The chain is Octanoyltransferase from Burkholderia thailandensis (strain ATCC 700388 / DSM 13276 / CCUG 48851 / CIP 106301 / E264).